The sequence spans 765 residues: Phosphoribosylformylglycinamidine synthase subunit PurL (765 aa).

His-59 is an active-site residue. 2 residues coordinate ATP: Tyr-62 and Lys-104. Position 106 (Glu-106) interacts with Mg(2+). Substrate contacts are provided by residues 107 to 110 (SHNH) and Arg-129. The active-site Proton acceptor is the His-108. Asp-130 contributes to the Mg(2+) binding site. Substrate is bound at residue Gln-254. Asp-282 lines the Mg(2+) pocket. Substrate is bound at residue 326-328 (ESQ). ATP-binding residues include Asn-522 and Gly-559. Position 560 (Asn-560) interacts with Mg(2+). A substrate-binding site is contributed by Ser-562.

The protein belongs to the FGAMS family. In terms of assembly, monomer. Part of the FGAM synthase complex composed of 1 PurL, 1 PurQ and 2 PurS subunits.

Its subcellular location is the cytoplasm. The catalysed reaction is N(2)-formyl-N(1)-(5-phospho-beta-D-ribosyl)glycinamide + L-glutamine + ATP + H2O = 2-formamido-N(1)-(5-O-phospho-beta-D-ribosyl)acetamidine + L-glutamate + ADP + phosphate + H(+). It functions in the pathway purine metabolism; IMP biosynthesis via de novo pathway; 5-amino-1-(5-phospho-D-ribosyl)imidazole from N(2)-formyl-N(1)-(5-phospho-D-ribosyl)glycinamide: step 1/2. Functionally, part of the phosphoribosylformylglycinamidine synthase complex involved in the purines biosynthetic pathway. Catalyzes the ATP-dependent conversion of formylglycinamide ribonucleotide (FGAR) and glutamine to yield formylglycinamidine ribonucleotide (FGAM) and glutamate. The FGAM synthase complex is composed of three subunits. PurQ produces an ammonia molecule by converting glutamine to glutamate. PurL transfers the ammonia molecule to FGAR to form FGAM in an ATP-dependent manner. PurS interacts with PurQ and PurL and is thought to assist in the transfer of the ammonia molecule from PurQ to PurL. This Thermobifida fusca (strain YX) protein is Phosphoribosylformylglycinamidine synthase subunit PurL.